We begin with the raw amino-acid sequence, 1710 residues long: Chromodomain-helicase-DNA-binding protein 1 (1710 aa).

Basic and acidic residues predominate over residues 1–10; that stretch reads MNGHSDEESV. The tract at residues 1-252 is disordered; it reads MNGHSDEESV…KEDEEMKTDS (252 aa). Low complexity predominate over residues 35–63; it reads SSGSSSDGSSSQSGSSDSDSGSESGSQSE. Basic and acidic residues predominate over residues 67–85; it reads DTSRENKVQAKPPKVDGAE. Over residues 105–121 the composition is skewed to low complexity; the sequence is QQQQQQQQQHQASSNSG. Acidic residues predominate over residues 122 to 136; it reads SEEDSSSSEDSDDSS. The span at 152–163 shows a compositional bias: low complexity; sequence SGSGSPSQSGSD. Positions 187-210 are enriched in basic residues; that stretch reads KVKSRKPQNRSKSKNGKKILGQKK. Phosphoserine is present on residues Ser215 and Ser216. The segment covering 215–226 has biased composition (acidic residues); it reads SSEEDDDEEDYD. A Phosphothreonine modification is found at Thr237. A Phosphoserine modification is found at Ser241. Thr250 is modified (phosphothreonine). The residue at position 252 (Ser252) is a Phosphoserine. Chromo domains lie at 272 to 364 and 389 to 452; these read ETIE…RWLK and QIVE…TPFK. At Ser471 the chain carries Phosphoserine. One can recognise a Helicase ATP-binding domain in the interval 493–663; it reads AHSWCKGNSC…WSLLHFIMPE (171 aa). Residue 506–513 participates in ATP binding; it reads DEMGLGKT. Positions 614 to 617 match the DEAH box motif; it reads DEAH. The Helicase C-terminal domain occupies 792–943; sequence LLDKLLIRLR…HLVIQRMDTT (152 aa). Phosphoserine is present on residues Ser1025, Ser1040, Ser1081, Ser1085, Ser1096, Ser1098, Ser1100, and Ser1102. The tract at residues 1080-1120 is disordered; it reads ISFNGSEGRRSRSRRYSGSDSDSISEGKRPKKRGRPRTIPR. Positions 1108–1117 are enriched in basic residues; the sequence is RPKKRGRPRT. Ser1161 bears the Phosphoserine mark. Disordered stretches follow at residues 1321 to 1408 and 1502 to 1710; these read EALS…ESEE and KKRQ…SRKT. Residues 1329–1345 are compositionally biased toward basic residues; that stretch reads SKRRKARAKKNKAMKSI. Ser1353, Ser1355, Ser1356, Ser1360, Ser1363, Ser1371, and Ser1373 each carry phosphoserine. Basic and acidic residues predominate over residues 1370-1379; sequence LSESKSDGRE. The interval 1409 to 1511 is CHD1 helical C-terminal domain (CHCT); the sequence is LDQKTFSICK…KKRQESQQNS (103 aa). Positions 1507–1516 are enriched in low complexity; sequence SQQNSDQNSN. Basic and acidic residues-rich tracts occupy residues 1523–1573 and 1582–1670; these read RNPD…DSRK and GKDH…DHRA. The residue at position 1622 (Ser1622) is a Phosphoserine. Repeat copies occupy residues 1628–1632, 1634–1638, and 1640–1644. The segment at 1628-1644 is 3 X 5 AA repeats of H-S-D-H-R; it reads HSDHRSHSDHRLHSDHR. 3 positions are modified to phosphoserine: Ser1677, Arg1688, and Ser1689. Basic and acidic residues predominate over residues 1690-1701; that stretch reads PFEHSVEHKSTP.

It belongs to the SNF2/RAD54 helicase family. Component of the SAGA complex. Interacts with BCLAF1, NCoR, SRP20 and SAFB. Specifically interacts with methylated H3K4me2 and H3K4me3. Interacts with the FACT complex, the PAF complex and the U2 snRNP. Interacts directly with PAF1, SFA3A1, SFA3A2, SFA3A3, SNF2 and SSRP1. Expressed in many tissues including in the brain, where the highest level of expression is found in the cerebellum and basal ganglia.

The protein localises to the nucleus. It is found in the cytoplasm. It catalyses the reaction ATP + H2O = ADP + phosphate + H(+). ATP-dependent chromatin-remodeling factor which functions as substrate recognition component of the transcription regulatory histone acetylation (HAT) complex SAGA. Regulates polymerase II transcription. Also required for efficient transcription by RNA polymerase I, and more specifically the polymerase I transcription termination step. Regulates negatively DNA replication. Not only involved in transcription-related chromatin-remodeling, but also required to maintain a specific chromatin configuration across the genome. Is also associated with histone deacetylase (HDAC) activity. Required for the bridging of SNF2, the FACT complex, the PAF complex as well as the U2 snRNP complex to H3K4me3. Functions to modulate the efficiency of pre-mRNA splicing in part through physical bridging of spliceosomal components to H3K4me3. Required for maintaining open chromatin and pluripotency in embryonic stem cells. The sequence is that of Chromodomain-helicase-DNA-binding protein 1 from Homo sapiens (Human).